Reading from the N-terminus, the 276-residue chain is Undecaprenyl-diphosphatase 1 (276 aa).

8 helical membrane passes run 1–21 (MSLWFLVFLSVLQGVTELFPV), 44–64 (QLLPFLVALHLGTALALLWYF), 87–107 (GHLMWALIIGTIPTGLVGLLL), 114–134 (VFHDLRIVAAALIINGVLLWL), 150–170 (LTFKQAFFVGLAQVGALIPGF), 190–210 (AAEFSFLLGTPIIFAAGLLEL), 222–242 (DALLGGVLTAIAAYLSVRFLM), and 251–271 (LASFGLYCVLAGLFCLGWFMF).

Belongs to the UppP family.

It localises to the cell inner membrane. It carries out the reaction di-trans,octa-cis-undecaprenyl diphosphate + H2O = di-trans,octa-cis-undecaprenyl phosphate + phosphate + H(+). Functionally, catalyzes the dephosphorylation of undecaprenyl diphosphate (UPP). Confers resistance to bacitracin. The chain is Undecaprenyl-diphosphatase 1 from Burkholderia pseudomallei (strain 1106a).